The primary structure comprises 675 residues: DNA ligase (675 aa).

NAD(+) contacts are provided by residues 34 to 38 (DAEYD), 83 to 84 (SL), and Glu-116. The active-site N6-AMP-lysine intermediate is the Lys-118. Arg-139, Glu-176, Lys-293, and Lys-317 together coordinate NAD(+). Residues Cys-411, Cys-414, Cys-429, and Cys-435 each contribute to the Zn(2+) site. The BRCT domain maps to 594–675 (AGENPFKGKT…FLAIVNAYKR (82 aa)).

The protein belongs to the NAD-dependent DNA ligase family. LigA subfamily. Requires Mg(2+) as cofactor. It depends on Mn(2+) as a cofactor.

It catalyses the reaction NAD(+) + (deoxyribonucleotide)n-3'-hydroxyl + 5'-phospho-(deoxyribonucleotide)m = (deoxyribonucleotide)n+m + AMP + beta-nicotinamide D-nucleotide.. DNA ligase that catalyzes the formation of phosphodiester linkages between 5'-phosphoryl and 3'-hydroxyl groups in double-stranded DNA using NAD as a coenzyme and as the energy source for the reaction. It is essential for DNA replication and repair of damaged DNA. The protein is DNA ligase of Mannheimia succiniciproducens (strain KCTC 0769BP / MBEL55E).